Consider the following 265-residue polypeptide: Cytochrome c oxidase subunit 3 (265 aa).

The next 7 membrane-spanning stretches (helical) occupy residues 16 to 36 (PWPI…VMYM), 41 to 61 (GGAT…FVWW), 84 to 104 (YGSI…FWAS), 137 to 157 (TPIL…ILAG), 162 to 182 (AVYA…FQGM), 200 to 220 (FYLA…FSII), and 245 to 265 (WHFV…WGGI).

It belongs to the cytochrome c oxidase subunit 3 family. As to quaternary structure, component of the cytochrome c oxidase (complex IV, CIV), a multisubunit enzyme composed of a catalytic core of 3 subunits and several supernumerary subunits. The complex exists as a monomer or a dimer and forms supercomplexes (SCs) in the inner mitochondrial membrane with ubiquinol-cytochrome c oxidoreductase (cytochrome b-c1 complex, complex III, CIII).

It localises to the mitochondrion inner membrane. It catalyses the reaction 4 Fe(II)-[cytochrome c] + O2 + 8 H(+)(in) = 4 Fe(III)-[cytochrome c] + 2 H2O + 4 H(+)(out). Functionally, component of the cytochrome c oxidase, the last enzyme in the mitochondrial electron transport chain which drives oxidative phosphorylation. The respiratory chain contains 3 multisubunit complexes succinate dehydrogenase (complex II, CII), ubiquinol-cytochrome c oxidoreductase (cytochrome b-c1 complex, complex III, CIII) and cytochrome c oxidase (complex IV, CIV), that cooperate to transfer electrons derived from NADH and succinate to molecular oxygen, creating an electrochemical gradient over the inner membrane that drives transmembrane transport and the ATP synthase. Cytochrome c oxidase is the component of the respiratory chain that catalyzes the reduction of oxygen to water. Electrons originating from reduced cytochrome c in the intermembrane space (IMS) are transferred via the dinuclear copper A center (CU(A)) of subunit 2 and heme A of subunit 1 to the active site in subunit 1, a binuclear center (BNC) formed by heme A3 and copper B (CU(B)). The BNC reduces molecular oxygen to 2 water molecules using 4 electrons from cytochrome c in the IMS and 4 protons from the mitochondrial matrix. The sequence is that of Cytochrome c oxidase subunit 3 (COX3) from Oenothera berteroana (Bertero's evening primrose).